The primary structure comprises 134 residues: D-ribose pyranase (134 aa).

The active-site Proton donor is His20. Residues Asp28, His101, and Tyr123–Asn125 contribute to the substrate site.

The protein belongs to the RbsD / FucU family. RbsD subfamily. Homodecamer.

The protein localises to the cytoplasm. The enzyme catalyses beta-D-ribopyranose = beta-D-ribofuranose. It functions in the pathway carbohydrate metabolism; D-ribose degradation; D-ribose 5-phosphate from beta-D-ribopyranose: step 1/2. Functionally, catalyzes the interconversion of beta-pyran and beta-furan forms of D-ribose. The chain is D-ribose pyranase from Pseudomonas syringae pv. tomato (strain ATCC BAA-871 / DC3000).